A 188-amino-acid chain; its full sequence is Probable nicotinate-nucleotide adenylyltransferase (188 aa).

It belongs to the NadD family.

The enzyme catalyses nicotinate beta-D-ribonucleotide + ATP + H(+) = deamido-NAD(+) + diphosphate. It functions in the pathway cofactor biosynthesis; NAD(+) biosynthesis; deamido-NAD(+) from nicotinate D-ribonucleotide: step 1/1. In terms of biological role, catalyzes the reversible adenylation of nicotinate mononucleotide (NaMN) to nicotinic acid adenine dinucleotide (NaAD). The sequence is that of Probable nicotinate-nucleotide adenylyltransferase from Listeria monocytogenes serovar 1/2a (strain ATCC BAA-679 / EGD-e).